A 151-amino-acid chain; its full sequence is Transcription factor ATOH7 (151 aa).

The bHLH domain occupies 39 to 91 (KRRLAANARERRRMQGLNTAFDRLRKVVPQWGQDKKLSKYETLQMALSYIMAL).

It is found in the nucleus. It localises to the perikaryon. Its subcellular location is the cell projection. The protein resides in the axon. In terms of biological role, transcription factor that binds to DNA at the consensus sequence 5'-CAG[GC]TG-3'. Positively regulates the determination of retinal ganglion cell fate and formation of the optic nerve and retino-hypothalamic tract. Required for retinal circadian rhythm photoentrainment. Plays a role in brainstem auditory signaling and binaural processing. During retinal neurogenesis, activates its own transcription, as well as the transcription of CHRNB3 and BRN3. The protein is Transcription factor ATOH7 of Gallus gallus (Chicken).